A 572-amino-acid polypeptide reads, in one-letter code: O-fucosyltransferase 16 (572 aa).

Residues 17-37 traverse the membrane as a helical; Signal-anchor for type II membrane protein segment; it reads LLPLVIAVSLSLLILFAFLSF. Residues Asn-92 and Asn-136 are each glycosylated (N-linked (GlcNAc...) asparagine). 274–276 contributes to the substrate binding site; that stretch reads HLR. 2 N-linked (GlcNAc...) asparagine glycosylation sites follow: Asn-446 and Asn-506. Residues 498-572 are disordered; that stretch reads ESRKLGKKNK…EPELEAMLSD (75 aa). A compositionally biased stretch (acidic residues) spans 521–541; that stretch reads DQTEEDDPDWSEPDYEEEQSD. An N-linked (GlcNAc...) asparagine glycan is attached at Asn-549. Over residues 554 to 566 the composition is skewed to acidic residues; it reads DYDDPSTSDEPEL.

It belongs to the glycosyltransferase GT106 family.

It is found in the membrane. The protein operates within glycan metabolism. This is O-fucosyltransferase 16 from Arabidopsis thaliana (Mouse-ear cress).